Consider the following 268-residue polypeptide: Inositol monophosphatase 3 (268 aa).

Residues E71, D91, L93, and D94 each contribute to the Mg(2+) site. A substrate-binding site is contributed by E71. Residues 93–96, 194–196, E213, and D221 each bind substrate; these read LDGT and GSC. D221 provides a ligand contact to Mg(2+).

Belongs to the inositol monophosphatase superfamily. Mg(2+) serves as cofactor. As to expression, expressed in the shoot apex, roots, stems, leaves, flowers and young and mature green fruits.

It carries out the reaction a myo-inositol phosphate + H2O = myo-inositol + phosphate. It participates in polyol metabolism; myo-inositol biosynthesis; myo-inositol from D-glucose 6-phosphate: step 2/2. In terms of biological role, responsible for the provision of inositol required for synthesis of phosphatidylinositol and polyphosphoinositides. The chain is Inositol monophosphatase 3 (IMP3) from Solanum lycopersicum (Tomato).